Consider the following 247-residue polypeptide: tRNA (guanine-N(1)-)-methyltransferase (247 aa).

S-adenosyl-L-methionine is bound by residues Gly116 and 135 to 140; that span reads IGDYVL.

It belongs to the RNA methyltransferase TrmD family. As to quaternary structure, homodimer.

Its subcellular location is the cytoplasm. The enzyme catalyses guanosine(37) in tRNA + S-adenosyl-L-methionine = N(1)-methylguanosine(37) in tRNA + S-adenosyl-L-homocysteine + H(+). Specifically methylates guanosine-37 in various tRNAs. The chain is tRNA (guanine-N(1)-)-methyltransferase from Symbiobacterium thermophilum (strain DSM 24528 / JCM 14929 / IAM 14863 / T).